The primary structure comprises 236 residues: Small ribosomal subunit protein uS3 (236 aa).

A KH type-2 domain is found at 39–107; the sequence is IRLYVLEELK…ETSLNIVEIH (69 aa). Residues 216–236 are disordered; it reads ERRAAEVDHSGSSSNRRRENA.

It belongs to the universal ribosomal protein uS3 family. In terms of assembly, part of the 30S ribosomal subunit. Forms a tight complex with proteins S10 and S14.

Binds the lower part of the 30S subunit head. Binds mRNA in the 70S ribosome, positioning it for translation. The sequence is that of Small ribosomal subunit protein uS3 from Bartonella henselae (strain ATCC 49882 / DSM 28221 / CCUG 30454 / Houston 1) (Rochalimaea henselae).